We begin with the raw amino-acid sequence, 309 residues long: Non-homologous end-joining factor 1 (309 aa).

The segment at 1 to 134 is globular head; that stretch reads MEAVLSALPW…TPVAVVCRQL (134 aa). The tract at residues 223-298 is C-terminal tail; the sequence is GKTGRKRKHS…AGSEDRSTSR (76 aa). Residues 223-309 form a disordered region; that stretch reads GKTGRKRKHS…KKKKAVGLFR (87 aa). Over residues 243 to 252 the composition is skewed to basic and acidic residues; sequence HITDHQHISE. Composition is skewed to polar residues over residues 253–265 and 273–290; these read STDV…SQEH and RSQV…STAG. Residues 297 to 309 are compositionally biased toward basic residues; sequence SRAKKKKAVGLFR. The XLM motif lies at 299–309; it reads AKKKKAVGLFR.

It belongs to the XRCC4-XLF family. XLF subfamily. As to quaternary structure, homodimer. Interacts with xrcc4; the interaction is direct and is mediated via a head-to-head interaction between N-terminal head regions. Component of the core long-range non-homologous end joining (NHEJ) complex (also named DNA-PK complex) composed of prkdc/DNA-PKcs, lig4, xrcc4, xrcc6/Ku70, xrcc5/Ku80 and nhej1/xlf.

The protein localises to the nucleus. It is found in the chromosome. Functionally, DNA repair protein involved in DNA non-homologous end joining (NHEJ); it is required for double-strand break (DSB) repair and V(D)J recombination and is also involved in telomere maintenance. Plays a key role in NHEJ by promoting the ligation of various mismatched and non-cohesive ends. In some studies, has been shown to associate with xrcc4 to form alternating helical filaments that bridge DNA and act like a bandage, holding together the broken DNA until it is repaired. Alternatively, it has also been shown that rather than forming filaments, a single nhej1 dimer interacts through both head domains with xrcc4 to promote the close alignment of DNA ends. The xrcc4-nhej1/xlf subcomplex binds to the DNA fragments of a DSB in a highly diffusive manner and robustly bridges two independent DNA molecules, holding the broken DNA fragments in close proximity to one other. The mobility of the bridges ensures that the ends remain accessible for further processing by other repair factors. The sequence is that of Non-homologous end-joining factor 1 (nhej1) from Danio rerio (Zebrafish).